A 344-amino-acid polypeptide reads, in one-letter code: Arginine N-succinyltransferase (344 aa).

Residue Leu-125 participates in succinyl-CoA binding. Catalysis depends on His-229, which acts as the Proton donor.

This sequence belongs to the arginine N-succinyltransferase family.

The enzyme catalyses succinyl-CoA + L-arginine = N(2)-succinyl-L-arginine + CoA + H(+). It participates in amino-acid degradation; L-arginine degradation via AST pathway; L-glutamate and succinate from L-arginine: step 1/5. Catalyzes the transfer of succinyl-CoA to arginine to produce N(2)-succinylarginine. The polypeptide is Arginine N-succinyltransferase (Salmonella agona (strain SL483)).